The following is a 124-amino-acid chain: Small ribosomal subunit protein uS12 (124 aa).

Residues 1-26 (MPTISQLVGSERKRLTKKTKSPALKA) are disordered. D89 is modified (3-methylthioaspartic acid). The tract at residues 104–124 (TAGVKDRRQSRSKYGAKAPKD) is disordered.

Belongs to the universal ribosomal protein uS12 family. Part of the 30S ribosomal subunit. Contacts proteins S8 and S17. May interact with IF1 in the 30S initiation complex.

Functionally, with S4 and S5 plays an important role in translational accuracy. Its function is as follows. Interacts with and stabilizes bases of the 16S rRNA that are involved in tRNA selection in the A site and with the mRNA backbone. Located at the interface of the 30S and 50S subunits, it traverses the body of the 30S subunit contacting proteins on the other side and probably holding the rRNA structure together. The combined cluster of proteins S8, S12 and S17 appears to hold together the shoulder and platform of the 30S subunit. The sequence is that of Small ribosomal subunit protein uS12 from Prochlorococcus marinus (strain MIT 9215).